We begin with the raw amino-acid sequence, 214 residues long: Ubiquitin-conjugating enzyme E2 21 (214 aa).

The UBC core domain occupies 21-168 (ARVTRKCKEV…AVYWTSYFAN (148 aa)). Residue cysteine 106 is the Glycyl thioester intermediate of the active site. Residues 172-214 (DVEPDFNRKVGRLIEMGIRETEAIVYLSCNNWKLEQALQFIFD) enclose the UBA domain.

It belongs to the ubiquitin-conjugating enzyme family.

The enzyme catalyses S-ubiquitinyl-[E1 ubiquitin-activating enzyme]-L-cysteine + [E2 ubiquitin-conjugating enzyme]-L-cysteine = [E1 ubiquitin-activating enzyme]-L-cysteine + S-ubiquitinyl-[E2 ubiquitin-conjugating enzyme]-L-cysteine.. The protein operates within protein modification; protein ubiquitination. Acts with E3 ubiquitin-protein ligase trim-21 to catalyze the 'Lys-48'-linked polyubiquitination of ced-1, promoting its proteasomal degradation to maintain appropriate ced-1 levels for apoptotic cell clearance. The protein is Ubiquitin-conjugating enzyme E2 21 (ubc-21) of Caenorhabditis elegans.